The sequence spans 270 residues: Orotidine 5'-phosphate decarboxylase (270 aa).

Substrate is bound by residues D41, 63 to 65 (KTH), 95 to 104 (DRKFADIGNT), Y221, and R239. The active-site Proton donor is K97.

It belongs to the OMP decarboxylase family.

The enzyme catalyses orotidine 5'-phosphate + H(+) = UMP + CO2. It participates in pyrimidine metabolism; UMP biosynthesis via de novo pathway; UMP from orotate: step 2/2. This Candida boidinii (Yeast) protein is Orotidine 5'-phosphate decarboxylase (URA3).